The chain runs to 972 residues: Macrophage colony-stimulating factor 1 receptor (972 aa).

The N-terminal stretch at 1-19 (MGPGVLLLLLVATAWHGQG) is a signal peptide. Topologically, residues 20–517 (IPVIEPSVPE…HPPDEFLFTP (498 aa)) are extracellular. Ig-like C2-type domains lie at 21–104 (PVIE…VKDP), 107–197 (PWNV…KVQK), 203–290 (PALT…HSTS), 299–399 (AYLN…LTLR), and 402–502 (PEVS…IPIS). 3 cysteine pairs are disulfide-bonded: cysteine 42-cysteine 84, cysteine 127-cysteine 177, and cysteine 224-cysteine 278. N-linked (GlcNAc...) asparagine glycans are attached at residues asparagine 45, asparagine 73, asparagine 153, asparagine 240, asparagine 275, asparagine 302, asparagine 335, asparagine 353, asparagine 412, asparagine 428, and asparagine 480. Cysteine 419 and cysteine 485 are oxidised to a cystine. A helical transmembrane segment spans residues 518–538 (VVVACMSIMALLLLLLLLLLY). At 539 to 972 (KYKQKPKYQV…LLQPNNYQFC (434 aa)) the chain is on the cytoplasmic side. The segment at 542–574 (QKPKYQVRWKIIESYEGNSYTFIDPTQLPYNEK) is regulatory juxtamembrane domain. Phosphotyrosine; by autocatalysis occurs at positions 546 and 561. The region spanning 582 to 910 (LQFGKTLGAG…PTFQQICSFL (329 aa)) is the Protein kinase domain. Residues 588-596 (LGAGAFGKV) and lysine 616 each bind ATP. Phosphotyrosine; by autocatalysis occurs at positions 699 and 708. Position 713 is a phosphoserine (serine 713). Tyrosine 723 carries the post-translational modification Phosphotyrosine; by autocatalysis. Catalysis depends on aspartate 778, which acts as the Proton acceptor. The interval 796–818 (DFGLARDIMNDSNYIVKGNARLP) is activation loop. Phosphotyrosine; by autocatalysis is present on residues tyrosine 809 and tyrosine 923. Positions 918 to 950 (RRERDYTNLPSSSRSGGSGSSSSELEEESSSEH) are disordered. Residues 928–940 (SSSRSGGSGSSSS) are compositionally biased toward low complexity. Tyrosine 969 bears the Phosphotyrosine; by autocatalysis mark.

It belongs to the protein kinase superfamily. Tyr protein kinase family. CSF-1/PDGF receptor subfamily. Interacts with INPPL1/SHIP2 and THOC5. Monomer. Homodimer. Interacts with CSF1 and IL34. Interaction with dimeric CSF1 or IL34 leads to receptor homodimerization. Interacts (tyrosine phosphorylated) with PLCG2 (via SH2 domain). Interacts (tyrosine phosphorylated) with PIK3R1 (via SH2 domain). Interacts (tyrosine phosphorylated) with FYN, YES1 and SRC (via SH2 domain). Interacts (tyrosine phosphorylated) with CBL, GRB2 and SLA2. Post-translationally, autophosphorylated in response to CSF1 or IL34 binding. Phosphorylation at Tyr-561 is important for normal down-regulation of signaling by ubiquitination, internalization and degradation. Phosphorylation at Tyr-561 and Tyr-809 is important for interaction with SRC family members, including FYN, YES1 and SRC, and for subsequent activation of these protein kinases. Phosphorylation at Tyr-699 and Tyr-923 is important for interaction with GRB2. Phosphorylation at Tyr-723 is important for interaction with PIK3R1. Phosphorylation at Tyr-708 is important for normal receptor degradation. Phosphorylation at Tyr-723 and Tyr-809 is important for interaction with PLCG2. Phosphorylation at Tyr-969 is important for interaction with CBL. Dephosphorylation by PTPN2 negatively regulates downstream signaling and macrophage differentiation. Ubiquitinated. Becomes rapidly polyubiquitinated after autophosphorylation, leading to its degradation. In terms of tissue distribution, expressed in bone marrow and in differentiated blood mononuclear cells.

It is found in the cell membrane. It carries out the reaction L-tyrosyl-[protein] + ATP = O-phospho-L-tyrosyl-[protein] + ADP + H(+). With respect to regulation, present in an inactive conformation in the absence of bound ligand. CSF1 or IL34 binding leads to dimerization and activation by autophosphorylation on tyrosine residues. Inhibited by imatinib/STI-571 (Gleevec), dasatinib, sunitinib/SU11248, lestaurtinib/CEP-701, midostaurin/PKC-412, Ki20227, linifanib/ABT-869, Axitinib/AG013736, sorafenib/BAY 43-9006 and GW2580. In terms of biological role, tyrosine-protein kinase that acts as a cell-surface receptor for CSF1 and IL34 and plays an essential role in the regulation of survival, proliferation and differentiation of hematopoietic precursor cells, especially mononuclear phagocytes, such as macrophages and monocytes. Promotes the release of pro-inflammatory chemokines in response to IL34 and CSF1, and thereby plays an important role in innate immunity and in inflammatory processes. Plays an important role in the regulation of osteoclast proliferation and differentiation, the regulation of bone resorption, and is required for normal bone and tooth development. Required for normal male and female fertility, and for normal development of milk ducts and acinar structures in the mammary gland during pregnancy. Promotes reorganization of the actin cytoskeleton, regulates formation of membrane ruffles, cell adhesion and cell migration, and promotes cancer cell invasion. Activates several signaling pathways in response to ligand binding, including the ERK1/2 and the JNK pathway. Phosphorylates PIK3R1, PLCG2, GRB2, SLA2 and CBL. Activation of PLCG2 leads to the production of the cellular signaling molecules diacylglycerol and inositol 1,4,5-trisphosphate, that then lead to the activation of protein kinase C family members, especially PRKCD. Phosphorylation of PIK3R1, the regulatory subunit of phosphatidylinositol 3-kinase, leads to activation of the AKT1 signaling pathway. Activated CSF1R also mediates activation of the MAP kinases MAPK1/ERK2 and/or MAPK3/ERK1, and of the SRC family kinases SRC, FYN and YES1. Activated CSF1R transmits signals both via proteins that directly interact with phosphorylated tyrosine residues in its intracellular domain, or via adapter proteins, such as GRB2. Promotes activation of STAT family members STAT3, STAT5A and/or STAT5B. Promotes tyrosine phosphorylation of SHC1 and INPP5D/SHIP-1. Receptor signaling is down-regulated by protein phosphatases, such as INPP5D/SHIP-1, that dephosphorylate the receptor and its downstream effectors, and by rapid internalization of the activated receptor. In the central nervous system, may play a role in the development of microglia macrophages. This is Macrophage colony-stimulating factor 1 receptor (CSF1R) from Homo sapiens (Human).